Consider the following 671-residue polypeptide: UvrABC system protein B (671 aa).

Positions Glu-25–Arg-412 constitute a Helicase ATP-binding domain. Gly-38 to Thr-45 is an ATP binding site. Positions Tyr-91 to Ile-114 match the Beta-hairpin motif. Positions Gln-429–Ile-582 constitute a Helicase C-terminal domain. The interval Pro-601 to Glu-624 is disordered. The span at Ala-614 to Glu-624 shows a compositional bias: basic and acidic residues. The region spanning Asn-632–Arg-667 is the UVR domain.

The protein belongs to the UvrB family. In terms of assembly, forms a heterotetramer with UvrA during the search for lesions. Interacts with UvrC in an incision complex.

The protein resides in the cytoplasm. Functionally, the UvrABC repair system catalyzes the recognition and processing of DNA lesions. A damage recognition complex composed of 2 UvrA and 2 UvrB subunits scans DNA for abnormalities. Upon binding of the UvrA(2)B(2) complex to a putative damaged site, the DNA wraps around one UvrB monomer. DNA wrap is dependent on ATP binding by UvrB and probably causes local melting of the DNA helix, facilitating insertion of UvrB beta-hairpin between the DNA strands. Then UvrB probes one DNA strand for the presence of a lesion. If a lesion is found the UvrA subunits dissociate and the UvrB-DNA preincision complex is formed. This complex is subsequently bound by UvrC and the second UvrB is released. If no lesion is found, the DNA wraps around the other UvrB subunit that will check the other stand for damage. This chain is UvrABC system protein B, found in Pseudomonas syringae pv. syringae (strain B728a).